The primary structure comprises 668 residues: DNA ligase (668 aa).

NAD(+) contacts are provided by residues 32 to 36 (DSEYD), 81 to 82 (SL), and E110. K112 functions as the N6-AMP-lysine intermediate in the catalytic mechanism. Residues R133, E167, K283, and K307 each contribute to the NAD(+) site. Zn(2+) contacts are provided by C401, C404, C419, and C424. One can recognise a BRCT domain in the interval 586–668 (QTDSEFNGKT…IQKQKEVENK (83 aa)).

This sequence belongs to the NAD-dependent DNA ligase family. LigA subfamily. The cofactor is Mg(2+). It depends on Mn(2+) as a cofactor.

It catalyses the reaction NAD(+) + (deoxyribonucleotide)n-3'-hydroxyl + 5'-phospho-(deoxyribonucleotide)m = (deoxyribonucleotide)n+m + AMP + beta-nicotinamide D-nucleotide.. DNA ligase that catalyzes the formation of phosphodiester linkages between 5'-phosphoryl and 3'-hydroxyl groups in double-stranded DNA using NAD as a coenzyme and as the energy source for the reaction. It is essential for DNA replication and repair of damaged DNA. In Staphylococcus carnosus (strain TM300), this protein is DNA ligase.